The following is a 196-amino-acid chain: Late protein I196L (196 aa).

Tandem repeats lie at residues 28-48 (SNYL…TSSN) and 49-68 (HITT…SSNH). One copy of the 3; approximate repeat lies at 69 to 87 (ITTAISNNITDKDDYTHFS).

Belongs to the asfivirus I196L family.

The protein is Late protein I196L of Ornithodoros (relapsing fever ticks).